Reading from the N-terminus, the 234-residue chain is Triosephosphate isomerase (234 aa).

A substrate-binding site is contributed by 8–10; that stretch reads NFK. The active-site Electrophile is the His-90. The active-site Proton acceptor is Glu-159. The substrate site is built by Gly-165 and Ser-197.

It belongs to the triosephosphate isomerase family. In terms of assembly, homodimer.

It localises to the cytoplasm. It carries out the reaction D-glyceraldehyde 3-phosphate = dihydroxyacetone phosphate. It functions in the pathway carbohydrate biosynthesis; gluconeogenesis. The protein operates within carbohydrate degradation; glycolysis; D-glyceraldehyde 3-phosphate from glycerone phosphate: step 1/1. Involved in the gluconeogenesis. Catalyzes stereospecifically the conversion of dihydroxyacetone phosphate (DHAP) to D-glyceraldehyde-3-phosphate (G3P). The chain is Triosephosphate isomerase from Helicobacter acinonychis (strain Sheeba).